Reading from the N-terminus, the 636-residue chain is MINITLPDDSIKSFKEYPKGMDVARGISEGFARNCVAMEIDGQLLDLDVEIRNDCAVRLITTRDAEAVEILRHSAAHVMAEAVQNLHADAKLTIGPVVEDGFYYDIDMAPISDADFPKIEAEMAKIVKAKKPFQRSEITKQEALELFKDNPYKVELINGLDDQTISIYQQGDFVDLCRGPHIPHTGMIKGLKLMKTSGAYWRADQEKAQLQRLYGTAFFDKKELKAYLHLIEEAKKRDHRKIGTRMGLFSFHQEAAGMPFFHAKGMEMWNELLAYWRDEHRAAGYVETKTPVMMSRHLWEKSGHWENYRENMYTSVVDGEEYAIKPMNCPGGMLLYKTESHSYRDLPLRAGEIGLVHRHELSGALSGLFRVRAFHQDDAHIFMTPEQIESEILGVLELVERIYSRFGLGFHLELSTRPKKSIGSDEQWAEATNGLKNALDKYGQPYAINEGDGAFYGPKIDIHIKDALGRTWQCGTVQLDMALPERFDLTYKGADNEKHRPIMIHRVIYGSIERFFGILVEHFAGKFPLWLAPVQAVVLPINDDLADHAQTVKKELESNGIRCDVDLRTESLKKKIREAQVNYVPLIITIGEKEKESGTLSVRTLDGKVRMGLSMADFIPPVLAHIRARQLDEDIL.

The region spanning 1 to 61 (MINITLPDDS…RNDCAVRLIT (61 aa)) is the TGS domain. The segment at 238-528 (DHRKIGTRMG…LVEHFAGKFP (291 aa)) is catalytic. Zn(2+) contacts are provided by C329, H380, and H505.

It belongs to the class-II aminoacyl-tRNA synthetase family. In terms of assembly, homodimer. The cofactor is Zn(2+).

The protein resides in the cytoplasm. The catalysed reaction is tRNA(Thr) + L-threonine + ATP = L-threonyl-tRNA(Thr) + AMP + diphosphate + H(+). Its function is as follows. Catalyzes the attachment of threonine to tRNA(Thr) in a two-step reaction: L-threonine is first activated by ATP to form Thr-AMP and then transferred to the acceptor end of tRNA(Thr). Also edits incorrectly charged L-seryl-tRNA(Thr). The chain is Threonine--tRNA ligase from Desulforapulum autotrophicum (strain ATCC 43914 / DSM 3382 / VKM B-1955 / HRM2) (Desulfobacterium autotrophicum).